Consider the following 501-residue polypeptide: Dipeptide and tripeptide permease A (501 aa).

At 1–34 the chain is on the cytoplasmic side; sequence MSTANNKPTESVSLNAFKQPKSFYLIFSIELWER. The chain crosses the membrane as a helical span at residues 35 to 55; that stretch reads FGYYGLQGIMAVYLVKQLGMS. Residues 56-59 lie on the Periplasmic side of the membrane; it reads EADS. Residues 60 to 80 traverse the membrane as a helical segment; sequence ITLFSSFSALVYGLVAIGGWL. The Cytoplasmic segment spans residues 81–89; it reads GDKVLGTKR. The chain crosses the membrane as a helical span at residues 90-110; the sequence is VIMLGAIVLAIGYGLVAWSGH. A topological domain (periplasmic) is located at residue Asp-111. Residues 112–132 traverse the membrane as a helical segment; sequence VAIVYMGMATIAVGNGLFKAN. The Cytoplasmic portion of the chain corresponds to 133 to 153; that stretch reads PSSLLSTCYAKDDPRLDGAFT. The helical transmembrane segment at 154–174 threads the bilayer; the sequence is MYYMSINIGSFFSMLATPWLA. At 175–178 the chain is on the periplasmic side; it reads AKFG. The chain crosses the membrane as a helical span at residues 179 to 199; that stretch reads WSVAFALSFVGMLITVVNFLF. Residues 200 to 217 lie on the Cytoplasmic side of the membrane; the sequence is CRSWVKDYGSKPDFEAVH. A helical transmembrane segment spans residues 218–238; sequence FGKLLATIAGVIVLIAIATWL. At 239–246 the chain is on the periplasmic side; that stretch reads LHNQGIAR. Residues 247–267 form a helical membrane-spanning segment; it reads MVLGVIALGIVIIFGKEAFAM. Over 268–274 the chain is Cytoplasmic; the sequence is QGAARRK. Residues 275 to 295 traverse the membrane as a helical segment; sequence MIVAFILMLEAIIFFVLYSQM. Topologically, residues 296–320 are periplasmic; it reads PTSLNFFAIRNVEHTILGIAVEPEQ. The helical transmembrane segment at 321 to 341 threads the bilayer; sequence YQALNPFWIIIGSPILAAIYN. At 342-352 the chain is on the cytoplasmic side; that stretch reads KMGDTLPMPTK. The helical transmembrane segment at 353 to 373 threads the bilayer; the sequence is FAIGMVLCSGAFLVLPLGAKF. The Periplasmic segment spans residues 374 to 383; it reads ATDAGIVSVN. Residues 384–404 traverse the membrane as a helical segment; it reads WLILSYGLQSIGELMISGLGL. At 405-414 the chain is on the cytoplasmic side; that stretch reads AMVAQLVPQR. Residues 415-435 form a helical membrane-spanning segment; sequence LMGFIMGSWFLTTAGANLIGG. Over 436–459 the chain is Periplasmic; it reads YVAGMMAVPENVTDPLMSLEVYGR. Residues 460–480 form a helical membrane-spanning segment; sequence VFLQIGVATAVIAALMLITAP. Residues 481 to 501 are Cytoplasmic-facing; sequence KLNRMTQDDEENAKAAKTATA.

The protein belongs to the major facilitator superfamily. Proton-dependent oligopeptide transporter (POT/PTR) (TC 2.A.17) family. DtpA subfamily.

Its subcellular location is the cell inner membrane. In terms of biological role, proton-dependent permease that transports di- and tripeptides. This chain is Dipeptide and tripeptide permease A, found in Citrobacter koseri (strain ATCC BAA-895 / CDC 4225-83 / SGSC4696).